Here is a 268-residue protein sequence, read N- to C-terminus: Aliphatic sulfonates import ATP-binding protein SsuB 2 (268 aa).

Residues 15–236 (LAVRKLQKTF…VRGSHRLAAL (222 aa)) form the ABC transporter domain. 47 to 54 (GRSGCGKS) contributes to the ATP binding site.

This sequence belongs to the ABC transporter superfamily. Aliphatic sulfonates importer (TC 3.A.1.17.2) family. The complex is composed of two ATP-binding proteins (SsuB), two transmembrane proteins (SsuC) and a solute-binding protein (SsuA).

The protein localises to the cell inner membrane. It carries out the reaction ATP + H2O + aliphatic sulfonate-[sulfonate-binding protein]Side 1 = ADP + phosphate + aliphatic sulfonateSide 2 + [sulfonate-binding protein]Side 1.. Functionally, part of the ABC transporter complex SsuABC involved in aliphatic sulfonates import. Responsible for energy coupling to the transport system. The sequence is that of Aliphatic sulfonates import ATP-binding protein SsuB 2 from Pseudomonas fluorescens (strain ATCC BAA-477 / NRRL B-23932 / Pf-5).